Consider the following 234-residue polypeptide: Glucosamine-6-phosphate deaminase (234 aa).

Asp62 acts as the Proton acceptor; for enolization step in catalysis. Catalysis depends on Asn128, which acts as the For ring-opening step. The active-site Proton acceptor; for ring-opening step is the His130. Glu135 functions as the For ring-opening step in the catalytic mechanism.

The protein belongs to the glucosamine/galactosamine-6-phosphate isomerase family. NagB subfamily.

The enzyme catalyses alpha-D-glucosamine 6-phosphate + H2O = beta-D-fructose 6-phosphate + NH4(+). The protein operates within amino-sugar metabolism; N-acetylneuraminate degradation; D-fructose 6-phosphate from N-acetylneuraminate: step 5/5. Its function is as follows. Catalyzes the reversible isomerization-deamination of glucosamine 6-phosphate (GlcN6P) to form fructose 6-phosphate (Fru6P) and ammonium ion. This is Glucosamine-6-phosphate deaminase from Streptococcus equi subsp. zooepidemicus (strain H70).